A 540-amino-acid chain; its full sequence is Chaperonin GroEL (540 aa).

Residues 29 to 32, 86 to 90, Gly413, 476 to 478, and Asp492 each bind ATP; these read TLGP, DGTTT, and NAA.

Belongs to the chaperonin (HSP60) family. Forms a cylinder of 14 subunits composed of two heptameric rings stacked back-to-back. Interacts with the co-chaperonin GroES.

Its subcellular location is the cytoplasm. It catalyses the reaction ATP + H2O + a folded polypeptide = ADP + phosphate + an unfolded polypeptide.. Together with its co-chaperonin GroES, plays an essential role in assisting protein folding. The GroEL-GroES system forms a nano-cage that allows encapsulation of the non-native substrate proteins and provides a physical environment optimized to promote and accelerate protein folding. This Streptococcus pneumoniae (strain ATCC 700669 / Spain 23F-1) protein is Chaperonin GroEL.